The sequence spans 326 residues: WRKY transcription factor 8 (326 aa).

The segment at 115–172 is disordered; it reads VRVSASPSSSEADHHPGEDSGKIRKKREVRDGGEDDQRSQKVVKTKKKEEKKKEPRVS. 2 stretches are compositionally biased toward basic and acidic residues: residues 125–153 and 161–170; these read EADH…DQRS and KKEEKKKEPR. Residues 177–242 constitute a DNA-binding region (WRKY); it reads TEVDHLEDGY…YESQHNHPIP (66 aa).

It belongs to the WRKY group II-c family. As to quaternary structure, interacts with VQ9 (via N-terminus). As to expression, highly expressed in roots and at lower levels in rosette leaves, cauline leaves, stems, flowers and siliques.

The protein resides in the nucleus. Functionally, transcription factor. Interacts specifically with the W box (5'-TTGAC[CT]-3'), a frequently occurring stress-responsive cis-acting element. Functions as a positive regulator of salt stress response. Binds the W box of LTI78/RD29A stress-response gene and directly regulates its transcription under salt stress. Functions antagonistically with VQ9 to regulate sodium and potassium homeostasis under salt stress by regulating the expression of downstream SOS (SALT OVERLY SENSITIVE) stress-responsive genes. The DNA-binding activity of WRKY8 is decreased by VQ9. Functions as a negative regulator of basal resistance to the bacterial pathogen P.syringae and as positive regulator of resistance to the fungal pathogen to B.cinerea. Functions as a positive regulator of defense response againt tobamovirus (TMV) by regulating both the abscisic acid and ethylene signaling pathways. Positively regulates ABI4 expression and negatively modulates ACS6 and ERF104 expression by directly binding to the W box consensus motifs within their promoters. The polypeptide is WRKY transcription factor 8 (WRKY8) (Arabidopsis thaliana (Mouse-ear cress)).